The sequence spans 80 residues: MAAGVTATELRELADDELVQKLKESKEELFNLRFQMATGQLENNRRLRVVRRDIARIYTIMRERELGLTVSPEGAEEGAA.

This sequence belongs to the universal ribosomal protein uL29 family.

The chain is Large ribosomal subunit protein uL29 from Saccharopolyspora erythraea (strain ATCC 11635 / DSM 40517 / JCM 4748 / NBRC 13426 / NCIMB 8594 / NRRL 2338).